Here is a 386-residue protein sequence, read N- to C-terminus: Chaperone protein DnaJ (386 aa).

One can recognise a J domain in the interval 6–70 (DYYEVLGVDK…QKRAAYDQYG (65 aa)). A CR-type zinc finger spans residues 141-223 (GKDTEVSYKR…CHGTGHEKKT (83 aa)). Cys154, Cys157, Cys171, Cys174, Cys197, Cys200, Cys211, and Cys214 together coordinate Zn(2+). CXXCXGXG motif repeat units lie at residues 154 to 161 (CHTCGGNG), 171 to 178 (CHKCKGSG), 197 to 204 (CDVCHGTG), and 211 to 218 (CETCHGTG). Positions 363 to 386 (LTGQSTEEQQSEGFFDKMKDAFKK) are disordered. Residues 364–374 (TGQSTEEQQSE) are compositionally biased toward polar residues. Residues 376 to 386 (FFDKMKDAFKK) are compositionally biased toward basic and acidic residues.

The protein belongs to the DnaJ family. As to quaternary structure, homodimer. Zn(2+) is required as a cofactor.

The protein localises to the cytoplasm. Its function is as follows. Participates actively in the response to hyperosmotic and heat shock by preventing the aggregation of stress-denatured proteins and by disaggregating proteins, also in an autonomous, DnaK-independent fashion. Unfolded proteins bind initially to DnaJ; upon interaction with the DnaJ-bound protein, DnaK hydrolyzes its bound ATP, resulting in the formation of a stable complex. GrpE releases ADP from DnaK; ATP binding to DnaK triggers the release of the substrate protein, thus completing the reaction cycle. Several rounds of ATP-dependent interactions between DnaJ, DnaK and GrpE are required for fully efficient folding. Also involved, together with DnaK and GrpE, in the DNA replication of plasmids through activation of initiation proteins. This is Chaperone protein DnaJ from Tetragenococcus halophilus (Pediococcus halophilus).